The primary structure comprises 230 residues: Ribonuclease HII (230 aa).

In terms of domain architecture, RNase H type-2 spans 1–224; the sequence is MIIIGIDEAG…CKRILDKSKQ (224 aa). The a divalent metal cation site is built by Asp7, Glu8, and Asp112.

This sequence belongs to the RNase HII family. Requires Mn(2+) as cofactor. It depends on Mg(2+) as a cofactor.

It is found in the cytoplasm. It catalyses the reaction Endonucleolytic cleavage to 5'-phosphomonoester.. Endonuclease that specifically degrades the RNA of RNA-DNA hybrids. The sequence is that of Ribonuclease HII (rnhB) from Methanocaldococcus jannaschii (strain ATCC 43067 / DSM 2661 / JAL-1 / JCM 10045 / NBRC 100440) (Methanococcus jannaschii).